The following is a 222-amino-acid chain: 25 kDa elongation factor 1-beta (222 aa).

The segment covering 75 to 94 has biased composition (low complexity); that stretch reads TSASAPAKQAPKKAASAPAK. Residues 75–98 are disordered; that stretch reads TSASAPAKQAPKKAASAPAKQADE.

Belongs to the EF-1-beta/EF-1-delta family. As to quaternary structure, EF-1 is composed of 4 subunits: alpha, beta, delta, and gamma.

EF-1-beta and EF-1-delta stimulate the exchange of GDP bound to EF-1-alpha to GTP. The chain is 25 kDa elongation factor 1-beta from Trypanosoma cruzi.